A 576-amino-acid chain; its full sequence is Probable proline--tRNA ligase, mitochondrial (576 aa).

The protein belongs to the class-II aminoacyl-tRNA synthetase family.

It is found in the mitochondrion. It catalyses the reaction tRNA(Pro) + L-proline + ATP = L-prolyl-tRNA(Pro) + AMP + diphosphate. The sequence is that of Probable proline--tRNA ligase, mitochondrial (AIM10) from Saccharomyces cerevisiae (strain ATCC 204508 / S288c) (Baker's yeast).